Reading from the N-terminus, the 413-residue chain is Peptide chain release factor 1, mitochondrial (413 aa).

The transit peptide at 1 to 40 (MRVLIRPNFLSNLIRYCSRGTHSHDRSLRSVLSSNMIRLY) directs the protein to the mitochondrion. Gln-287 bears the N5-methylglutamine mark.

The protein belongs to the prokaryotic/mitochondrial release factor family. In terms of processing, methylation increases the termination efficiency of RF1. Mostly expressed in seedlings, stems and adult plants, and, to a lower extent, in siliques. Barely detected in etiolated seedlings and roots.

The protein localises to the mitochondrion. Functionally, peptide chain release factor 1 directs the termination of translation in response to the peptide chain termination codons UAG and UAA in mitochondria. The sequence is that of Peptide chain release factor 1, mitochondrial from Arabidopsis thaliana (Mouse-ear cress).